The sequence spans 434 residues: Trigger factor (434 aa).

In terms of domain architecture, PPIase FKBP-type spans 160-245 (GDKAKINFVG…LNEVQAANLP (86 aa)).

This sequence belongs to the FKBP-type PPIase family. Tig subfamily.

It is found in the cytoplasm. It catalyses the reaction [protein]-peptidylproline (omega=180) = [protein]-peptidylproline (omega=0). Functionally, involved in protein export. Acts as a chaperone by maintaining the newly synthesized protein in an open conformation. Functions as a peptidyl-prolyl cis-trans isomerase. This chain is Trigger factor, found in Shewanella halifaxensis (strain HAW-EB4).